The sequence spans 583 residues: Atlastin-2 (583 aa).

A disordered region spans residues 1-44; sequence MAEGDEAARGQQPHQGLWRRRRTSDPSAAVNHVSSTTSLGENYE. The N-terminal hypervariable region (HVR) stretch occupies residues 1-60; sequence MAEGDEAARGQQPHQGLWRRRRTSDPSAAVNHVSSTTSLGENYEDDDLVNSDEVMKKPCP. Topologically, residues 1–476 are cytoplasmic; it reads MAEGDEAARG…NIFYAARTPA (476 aa). Serine 24 is subject to Phosphoserine. Residues 91–336 form the GB1/RHD3-type G domain; that stretch reads DLNIVVVSVA…LVPLLLAPEN (246 aa). Residues arginine 104, lysine 105, glycine 106, lysine 107, serine 108, phenylalanine 109, glutamine 175, arginine 244, and aspartate 245 each coordinate GDP. The GTP site is built by arginine 104, lysine 105, glycine 106, lysine 107, serine 108, and phenylalanine 109. Serine 108 serves as a coordination point for Mg(2+). GTP is bound by residues arginine 244 and aspartate 245. A coiled-coil region spans residues 256-284; sequence LEGGKQFLEKRLQVKQNQHEELQNVRKHI. Lysine 270 is modified (N6-methyllysine). Positions 303 and 306 each coordinate GDP. Valine 303 is a GTP binding site. The 3HB (three-helix bundle) domain stretch occupies residues 374–465; that stretch reads MLQATAEANN…YANFIKHNDG (92 aa). A linker region spans residues 466 to 474; sequence KNIFYAART. A helical transmembrane segment spans residues 477–497; it reads TLFAVMFAMYIISGLTGFIGL. Residues 498–499 are Lumenal-facing; sequence NS. Residues 500–520 form a helical membrane-spanning segment; it reads IAVLCNLVMGLALIFLCTWAY. At 521–583 the chain is on the cytoplasmic side; the sequence is VKYSGEFREI…VSHHARLKTD (63 aa). Residues 547 to 583 are autoinhibitory domain; it reads KPLGDNLMEENIRQSVTNSIKAGLTDQVSHHARLKTD.

Belongs to the TRAFAC class dynamin-like GTPase superfamily. GB1/RHD3 GTPase family. GB1 subfamily. Monomeric and homodimeric. The homodimer, transiently formed by two molecules on opposing membranes, is the active form mediating ER membrane fusion. Interacts with REEP5 and RTN3; these proteins are involved in endoplasmic reticulum tubular network organization. Interacts with ZFYVE27; both proteins are involved in endoplasmic reticulum tubular network organization. Expressed in peripheral tissues (at protein level).

Its subcellular location is the endoplasmic reticulum membrane. The enzyme catalyses GTP + H2O = GDP + phosphate + H(+). Its activity is regulated as follows. With its alternative C-terminus disrupting the autoinhibitory domain, this brain-specific isoform is probably more active at fusing ER membranes. In terms of biological role, atlastin-2 (ATL2) is a membrane-anchored GTPase that mediates the GTP-dependent fusion of endoplasmic reticulum (ER) membranes, maintaining the continuous ER network. It facilitates the formation of three-way junctions where ER tubules intersect. Two atlastin-2 on neighboring ER tubules bind GTP and form loose homodimers through the GB1/RHD3-type G domains and 3HB regions. Upon GTP hydrolysis, the 3HB regions tighten, pulling the membranes together to drive their fusion. After fusion, the homodimer disassembles upon release of inorganic phosphate (Pi). Subsequently, GDP dissociates, resetting the monomers to a conformation ready for a new fusion cycle. The protein is Atlastin-2 of Homo sapiens (Human).